We begin with the raw amino-acid sequence, 333 residues long: Phosphate acyltransferase (333 aa).

Belongs to the PlsX family. As to quaternary structure, homodimer. Probably interacts with PlsY.

The protein resides in the cytoplasm. It carries out the reaction a fatty acyl-[ACP] + phosphate = an acyl phosphate + holo-[ACP]. It participates in lipid metabolism; phospholipid metabolism. In terms of biological role, catalyzes the reversible formation of acyl-phosphate (acyl-PO(4)) from acyl-[acyl-carrier-protein] (acyl-ACP). This enzyme utilizes acyl-ACP as fatty acyl donor, but not acyl-CoA. This chain is Phosphate acyltransferase, found in Thermoanaerobacterium thermosaccharolyticum (strain ATCC 7956 / DSM 571 / NCIMB 9385 / NCA 3814 / NCTC 13789 / WDCM 00135 / 2032) (Clostridium thermosaccharolyticum).